The following is a 156-amino-acid chain: Small ribosomal subunit protein uS7 (156 aa).

The protein belongs to the universal ribosomal protein uS7 family. As to quaternary structure, part of the 30S ribosomal subunit. Contacts proteins S9 and S11.

One of the primary rRNA binding proteins, it binds directly to 16S rRNA where it nucleates assembly of the head domain of the 30S subunit. Is located at the subunit interface close to the decoding center, probably blocks exit of the E-site tRNA. This Moorella thermoacetica (strain ATCC 39073 / JCM 9320) protein is Small ribosomal subunit protein uS7.